The primary structure comprises 445 residues: UDP-N-acetylmuramoylalanine--D-glutamate ligase (445 aa).

126–132 (GTSGKTT) lines the ATP pocket.

It belongs to the MurCDEF family.

The protein resides in the cytoplasm. It catalyses the reaction UDP-N-acetyl-alpha-D-muramoyl-L-alanine + D-glutamate + ATP = UDP-N-acetyl-alpha-D-muramoyl-L-alanyl-D-glutamate + ADP + phosphate + H(+). The protein operates within cell wall biogenesis; peptidoglycan biosynthesis. Cell wall formation. Catalyzes the addition of glutamate to the nucleotide precursor UDP-N-acetylmuramoyl-L-alanine (UMA). The sequence is that of UDP-N-acetylmuramoylalanine--D-glutamate ligase from Nitratidesulfovibrio vulgaris (strain DSM 19637 / Miyazaki F) (Desulfovibrio vulgaris).